A 377-amino-acid chain; its full sequence is Rhodopsin, long-wavelength (377 aa).

Residues 1 to 51 lie on the Extracellular side of the membrane; it reads MIAVSGPSYEAFSYGGQARFNNQTVVDKVPPDMLHLIDANWYQYPPLNPMW. A glycan (N-linked (GlcNAc...) asparagine) is linked at asparagine 22. The chain crosses the membrane as a helical span at residues 52–76; it reads HGILGFVIGMLGFVSAMGNGMVVYI. Residues 77 to 88 lie on the Cytoplasmic side of the membrane; the sequence is FLSTKSLRTPSN. Residues 89-113 traverse the membrane as a helical segment; it reads LFVINLAISNFLMMFCMSPPMVINC. Over 114 to 128 the chain is Extracellular; the sequence is YYETWVLGPLFCQIY. A disulfide bond links cysteine 125 and cysteine 202. A helical transmembrane segment spans residues 129-148; the sequence is AMLGSLFGCGSIWTMTMIAF. The Cytoplasmic portion of the chain corresponds to 149–167; the sequence is DRYNVIVKGLSGKPLSING. Residues 168-191 traverse the membrane as a helical segment; it reads ALIRIIAIWLFSLGWTIAPMFGWN. At 192-215 the chain is on the extracellular side; the sequence is RYVPEGNMTACGTDYFNRGLLSAS. Asparagine 198 carries N-linked (GlcNAc...) asparagine glycosylation. A helical transmembrane segment spans residues 216–243; that stretch reads YLVCYGIWVYFVPLFLIIYSYWFIIQAV. Residues 244 to 278 lie on the Cytoplasmic side of the membrane; sequence AAHEKNMREQAKKMNVASLRSSENQNTSAECKLAK. The helical transmembrane segment at 279-302 threads the bilayer; it reads VALMTISLWFMAWTPYLVINFSGI. The Extracellular portion of the chain corresponds to 303–309; that stretch reads FNLVKIS. A helical transmembrane segment spans residues 310 to 334; the sequence is PLFTIWGSLFAKANAVYNPIVYGIS. Residue lysine 321 is modified to N6-(retinylidene)lysine. Over 335–377 the chain is Cytoplasmic; sequence HPKYRAALFAKFPSLACAAEPSSDAVSTTSGTTTVTDNEKSNA. Residues 357-370 show a composition bias toward low complexity; that stretch reads SDAVSTTSGTTTVT. The disordered stretch occupies residues 357–377; sequence SDAVSTTSGTTTVTDNEKSNA.

This sequence belongs to the G-protein coupled receptor 1 family. Opsin subfamily. In terms of processing, phosphorylated on some or all of the serine and threonine residues present in the C-terminal region.

Its subcellular location is the membrane. Its function is as follows. Visual pigments are the light-absorbing molecules that mediate vision. They consist of an apoprotein, opsin, covalently linked to 11-cis-retinal. The protein is Rhodopsin, long-wavelength of Apis mellifera (Honeybee).